Here is a 90-residue protein sequence, read N- to C-terminus: Probable Fe(2+)-trafficking protein (90 aa).

This sequence belongs to the Fe(2+)-trafficking protein family.

Could be a mediator in iron transactions between iron acquisition and iron-requiring processes, such as synthesis and/or repair of Fe-S clusters in biosynthetic enzymes. In Nitrosococcus oceani (strain ATCC 19707 / BCRC 17464 / JCM 30415 / NCIMB 11848 / C-107), this protein is Probable Fe(2+)-trafficking protein.